Here is an 88-residue protein sequence, read N- to C-terminus: U1-hexatoxin-Iw1d (88 aa).

Residues 1–17 form the signal peptide; it reads LKFVVLICLVIMASTSA. Gln18 is subject to Pyrrolidone carboxylic acid. 5 cysteine pairs are disulfide-bonded: Cys20-Cys31, Cys25-Cys39, Cys30-Cys65, Cys49-Cys73, and Cys67-Cys80. Positions 86–88 are excised as a propeptide; that stretch reads RSE.

Belongs to the MIT-like AcTx family. As to expression, expressed by the venom gland.

The protein resides in the secreted. This chain is U1-hexatoxin-Iw1d, found in Illawarra wisharti (Illawarra funnel-web spider).